The sequence spans 435 residues: MTQTVNVIGAGLAGSEAAYQLSERGIKVNLIEMRPVKQTPAHHTDKFAELVCSNSLRGNALTNGVGVLKEEMRRLNSIIIEAADKARVPAGGALAVDRHDFSGYITETLKNHENITVINEEINAIPDGYTIIATGPLTTETLAQEIVDITGKDQLYFYDAAAPIIEKESIDMDKVYLKSRYDKGEAAYLNCPMTEDEFNRFYDAVLEAEAAPVNSFEKEKYFEGCMPFEVMAERGRKTLLFGPMKPVGLEDPKTGKRPYAVVQLRQDDAAGTLYNIVGFQTHLKWGAQKEVIKLIPGLENVDIVRYGVMHRNTFINSPDVLNEKYELISQPNIQFAGQMTGVEGYVESAASGLVAGINLAHKILGKGEVVFPRETMIGSMAYYISHAKNNKNFQPMNANFGLLPSLETRIKDKKERYEAQANRALDYLENFKKTL.

9–14 (GAGLAG) contacts FAD.

Belongs to the MnmG family. TrmFO subfamily. It depends on FAD as a cofactor.

The protein resides in the cytoplasm. The catalysed reaction is uridine(54) in tRNA + (6R)-5,10-methylene-5,6,7,8-tetrahydrofolate + NADH + H(+) = 5-methyluridine(54) in tRNA + (6S)-5,6,7,8-tetrahydrofolate + NAD(+). It catalyses the reaction uridine(54) in tRNA + (6R)-5,10-methylene-5,6,7,8-tetrahydrofolate + NADPH + H(+) = 5-methyluridine(54) in tRNA + (6S)-5,6,7,8-tetrahydrofolate + NADP(+). Its function is as follows. Catalyzes the folate-dependent formation of 5-methyl-uridine at position 54 (M-5-U54) in all tRNAs. The sequence is that of Methylenetetrahydrofolate--tRNA-(uracil-5-)-methyltransferase TrmFO from Staphylococcus aureus (strain MRSA252).